The following is a 169-amino-acid chain: Cell division inhibitor SulA (169 aa).

Positions 1–16 are enriched in polar residues; it reads MFTSAHANRSPLTSAS. The segment at 1–20 is disordered; that stretch reads MFTSAHANRSPLTSASVRRP. A ftsZ binding region spans residues 106–112; that stretch reads ALRTGNY. A lon protease binding region spans residues 162-169; sequence KIHSNLYH.

It belongs to the SulA family. Interacts with FtsZ. Is rapidly cleaved and degraded by the Lon protease once DNA damage is repaired.

In terms of biological role, component of the SOS system and an inhibitor of cell division. Accumulation of SulA causes rapid cessation of cell division and the appearance of long, non-septate filaments. In the presence of GTP, binds a polymerization-competent form of FtsZ in a 1:1 ratio, thus inhibiting FtsZ polymerization and therefore preventing it from participating in the assembly of the Z ring. This mechanism prevents the premature segregation of damaged DNA to daughter cells during cell division. The sequence is that of Cell division inhibitor SulA from Klebsiella aerogenes (Enterobacter aerogenes).